Reading from the N-terminus, the 914-residue chain is Exoglucanase-2 (914 aa).

The N-terminal stretch at 1–33 is a signal peptide; sequence MKRRLMKGISLLTLVFLIGIMLQLSLKSELTAY. In terms of domain architecture, CBM3 spans 763-914; the sequence is VEGVLIIQSF…SGNLVYGIEP (152 aa).

It belongs to the glycosyl hydrolase 48 (cellulase L) family.

It catalyses the reaction Hydrolysis of (1-&gt;4)-beta-D-glucosidic linkages in cellulose and cellotetraose, releasing cellobiose from the non-reducing ends of the chains.. The polypeptide is Exoglucanase-2 (celY) (Thermoclostridium stercorarium (strain ATCC 35414 / DSM 8532 / NCIMB 11754) (Clostridium stercorarium)).